Reading from the N-terminus, the 429-residue chain is Phosphoribosylamine--glycine ligase (429 aa).

Residues 109 to 316 enclose the ATP-grasp domain; that stretch reads KDFLARHNIP…LVELCQAAIA (208 aa). 135-196 serves as a coordination point for ATP; the sequence is VREKGAPIVV…EEFLDGEEAS (62 aa). The Mg(2+) site is built by Glu-286 and Asn-288.

Belongs to the GARS family. Mg(2+) is required as a cofactor. Mn(2+) serves as cofactor.

The enzyme catalyses 5-phospho-beta-D-ribosylamine + glycine + ATP = N(1)-(5-phospho-beta-D-ribosyl)glycinamide + ADP + phosphate + H(+). It functions in the pathway purine metabolism; IMP biosynthesis via de novo pathway; N(1)-(5-phospho-D-ribosyl)glycinamide from 5-phospho-alpha-D-ribose 1-diphosphate: step 2/2. The protein is Phosphoribosylamine--glycine ligase of Vibrio cholerae serotype O1 (strain ATCC 39315 / El Tor Inaba N16961).